A 276-amino-acid chain; its full sequence is Putative respiratory nitrate reductase heme subunit ORF7 (276 aa).

Residues Met138 and Lys228 each contribute to the heme b site.

As to quaternary structure, probable multiprotein complex; a catalytic heterodimer of an alpha and beta chain is proposed to associate with additional subunits involved in membrane attachment and electron transfer. Heme b is required as a cofactor.

The protein localises to the cell membrane. The respiratory membrane-bound nitrate reductase enzyme complex plays a role in generation of metabolic energy by using nitrate as a terminal electron acceptor during anaerobic conditions. May transfer electrons to the iron-sulfur centers of the catalytic beta subunit. The sequence is that of Putative respiratory nitrate reductase heme subunit ORF7 from Haloferax mediterranei (strain ATCC 33500 / DSM 1411 / JCM 8866 / NBRC 14739 / NCIMB 2177 / R-4) (Halobacterium mediterranei).